We begin with the raw amino-acid sequence, 270 residues long: Phosphatidylglycerol--prolipoprotein diacylglyceryl transferase (270 aa).

7 helical membrane passes run 17–37, 59–79, 95–115, 129–149, 175–195, 202–222, and 237–257; these read LAIR…LWFG, MLFY…VLFY, WEGG…MWVF, FIAP…FING, PSQL…LWLF, MGAV…LAEF, and LSMG…MVVW. Arg-142 provides a ligand contact to a 1,2-diacyl-sn-glycero-3-phospho-(1'-sn-glycerol).

The protein belongs to the Lgt family.

The protein localises to the cell inner membrane. The enzyme catalyses L-cysteinyl-[prolipoprotein] + a 1,2-diacyl-sn-glycero-3-phospho-(1'-sn-glycerol) = an S-1,2-diacyl-sn-glyceryl-L-cysteinyl-[prolipoprotein] + sn-glycerol 1-phosphate + H(+). The protein operates within protein modification; lipoprotein biosynthesis (diacylglyceryl transfer). Catalyzes the transfer of the diacylglyceryl group from phosphatidylglycerol to the sulfhydryl group of the N-terminal cysteine of a prolipoprotein, the first step in the formation of mature lipoproteins. The sequence is that of Phosphatidylglycerol--prolipoprotein diacylglyceryl transferase from Cupriavidus metallidurans (strain ATCC 43123 / DSM 2839 / NBRC 102507 / CH34) (Ralstonia metallidurans).